Consider the following 161-residue polypeptide: ATP synthase subunit b 1 (161 aa).

A helical membrane pass occupies residues 3–23 (LDATFYALVGLILFFVLIAYL).

It belongs to the ATPase B chain family. In terms of assembly, F-type ATPases have 2 components, F(1) - the catalytic core - and F(0) - the membrane proton channel. F(1) has five subunits: alpha(3), beta(3), gamma(1), delta(1), epsilon(1). F(0) has three main subunits: a(1), b(2) and c(10-14). The alpha and beta chains form an alternating ring which encloses part of the gamma chain. F(1) is attached to F(0) by a central stalk formed by the gamma and epsilon chains, while a peripheral stalk is formed by the delta and b chains.

It is found in the cell inner membrane. In terms of biological role, f(1)F(0) ATP synthase produces ATP from ADP in the presence of a proton or sodium gradient. F-type ATPases consist of two structural domains, F(1) containing the extramembraneous catalytic core and F(0) containing the membrane proton channel, linked together by a central stalk and a peripheral stalk. During catalysis, ATP synthesis in the catalytic domain of F(1) is coupled via a rotary mechanism of the central stalk subunits to proton translocation. Functionally, component of the F(0) channel, it forms part of the peripheral stalk, linking F(1) to F(0). In Rhizobium meliloti (strain 1021) (Ensifer meliloti), this protein is ATP synthase subunit b 1.